A 295-amino-acid polypeptide reads, in one-letter code: MELLSALSLDDLAVAFSKLPVFPLFDVAYYIISILYLKYEPGAVDLSKRSPVASWLCAMLYCFGSYILADVLLGESPIHYFSNNANILLASAVWYLTFFCPLNIFYKIVSFLPLKLVLVGMKEVVRVRKIAMGIHHAHHHYHHGWVIMVLIGWVKGSGVALMSNLEQLLRGVWKPETNEILHMSFPTKASLYGAILFTLQQAHWLPISKAYLIFFFTLFMAICKIYMTATHSHGSPFAIFESGICCVLFGAANGDHDDHGDHHHHHDDHDVSHSTVKSKEELNEGTRKRKTKKAE.

At 1–11 (MELLSALSLDD) the chain is on the lumenal side. The helical transmembrane segment at 12 to 32 (LAVAFSKLPVFPLFDVAYYII) threads the bilayer. At 33-51 (SILYLKYEPGAVDLSKRSP) the chain is on the cytoplasmic side. Residues 52-72 (VASWLCAMLYCFGSYILADVL) form a helical membrane-spanning segment. Residues 73 to 84 (LGESPIHYFSNN) are Lumenal-facing. G74 contacts Ca(2+). A helical membrane pass occupies residues 85–105 (ANILLASAVWYLTFFCPLNIF). Topologically, residues 106–144 (YKIVSFLPLKLVLVGMKEVVRVRKIAMGIHHAHHHYHHG) are cytoplasmic. The a 1,2-diacyl-sn-glycero-3-phospho-(1D-myo-inositol-4,5-bisphosphate) site is built by K122 and R126. The chain crosses the membrane as a helical span at residues 145 to 165 (WVIMVLIGWVKGSGVALMSNL). At 166-178 (EQLLRGVWKPETN) the chain is on the lumenal side. A helical membrane pass occupies residues 179 to 199 (EILHMSFPTKASLYGAILFTL). Topologically, residues 200–201 (QQ) are cytoplasmic. A helical transmembrane segment spans residues 202-222 (AHWLPISKAYLIFFFTLFMAI). Topologically, residues 223-233 (CKIYMTATHSH) are lumenal. Residues 234–254 (GSPFAIFESGICCVLFGAANG) form a helical membrane-spanning segment. At 255–295 (DHDDHGDHHHHHDDHDVSHSTVKSKEELNEGTRKRKTKKAE) the chain is on the cytoplasmic side. Residues 259 to 286 (HGDHHHHHDDHDVSHSTVKSKEELNEGT) show a composition bias toward basic and acidic residues. The disordered stretch occupies residues 259–295 (HGDHHHHHDDHDVSHSTVKSKEELNEGTRKRKTKKAE).

Belongs to the TMEM38 family. As to quaternary structure, homotrimer; conformation seems to be controled by binding to diacylglycerol (DAG).

Its subcellular location is the sarcoplasmic reticulum membrane. The protein resides in the nucleus membrane. It carries out the reaction K(+)(in) = K(+)(out). With respect to regulation, channel activity is activated by a change of voltage within the sarcoplasmic reticulum lumen and blocked by luminal high Ca(2+) levels. Its function is as follows. Intracellular monovalent cation channel required for maintenance of rapid intracellular calcium release. Acts as a potassium counter-ion channel that functions in synchronization with calcium release from intracellular stores. Opened by a change of voltage within the sarcoplasmic reticulum lumen. This is Trimeric intracellular cation channel type A (tmem38a) from Xenopus tropicalis (Western clawed frog).